The primary structure comprises 156 residues: Putative increased recombination centers protein 11 (156 aa).

A helical membrane pass occupies residues 20–42; that stretch reads AALGATCLLHYLTTSLSIRFFFH.

It localises to the membrane. In Saccharomyces cerevisiae (strain ATCC 204508 / S288c) (Baker's yeast), this protein is Putative increased recombination centers protein 11 (IRC11).